The chain runs to 244 residues: Secreted RxLR effector protein RXLR-C05 (244 aa).

The signal sequence occupies residues 1 to 21 (MRGAFYVATAFLIASSTRTAA). Residues 37–46 (LPVGDSDTKS) show a composition bias toward basic and acidic residues. Residues 37 to 56 (LPVGDSDTKSLPRRSLKGSG) are disordered. The short motif at 50–68 (RSLKGSGDRLEIPVAEEER) is the RxLR-dEER element.

Belongs to the RxLR effector family.

Its subcellular location is the secreted. The protein localises to the host cytoplasm. It is found in the host nucleus. Its function is as follows. Secreted effector that suppresses pattern-triggered immunity (PTI) in plant host. This is Secreted RxLR effector protein RXLR-C05 from Plasmopara halstedii (Downy mildew of sunflower).